Consider the following 260-residue polypeptide: Putative hydro-lyase Dshi_0610 (260 aa).

The protein belongs to the D-glutamate cyclase family.

In Dinoroseobacter shibae (strain DSM 16493 / NCIMB 14021 / DFL 12), this protein is Putative hydro-lyase Dshi_0610.